A 970-amino-acid polypeptide reads, in one-letter code: Villin-3 (970 aa).

6 Gelsolin-like repeats span residues 31 to 111 (AVPV…ERFL), 151 to 219 (TVHV…EDGK), 273 to 339 (VLTR…TVIF), 416 to 484 (KFYS…PAEF), 536 to 576 (AIQV…QELA), and 643 to 714 (NFTQ…PQFF). Residues 741–908 (DGVKPKLDKP…EGQPENEEGL (168 aa)) are disordered. Residues 755–778 (TTSSSHTGRSSVPEKSQRSRSMSF) are compositionally biased toward polar residues. Positions 833–842 (AASIAAISAS) are enriched in low complexity. Positions 878–893 (KDSTPSKDSPTVTPTI) are enriched in polar residues. Positions 905–970 (EEGLPVYPYE…NRLKIALQLF (66 aa)) constitute an HP domain.

This sequence belongs to the villin/gelsolin family. Expressed in roots, young leaves, and inflorescences, mostly in the vasculature of roots, leaves, and filaments of the anthers and in epidermal cells of the elongation zone and root hairs. Also detected in guard cells.

The protein localises to the cytoplasm. Its subcellular location is the cytoskeleton. In terms of biological role, ca(2+)-regulated actin-binding protein. Binds actin microfilaments (MFs). Involved in actin filament bundling, severing and capping. Caps the barbed end of actin filaments and is able to sever them in a calcium-dependent manner. MF severing is promoted by VLN1. The chain is Villin-3 from Oryza sativa subsp. japonica (Rice).